An 887-amino-acid chain; its full sequence is Phosphatidylinositol 3-kinase catalytic subunit type 3 (887 aa).

The region spanning 35-184 (YKAVLEDPML…LAKLTKAHRQ (150 aa)) is the C2 PI3K-type domain. Residues 149–170 (VEADGSEPTRTPGRTSSTLSED) are disordered. Positions 156–170 (PTRTPGRTSSTLSED) are enriched in polar residues. Position 163 is a phosphothreonine; by AMPK (T163). S165 carries the phosphoserine; by AMPK modification. Phosphoserine is present on residues S244, S261, and S282. In terms of domain architecture, PIK helical spans 283–520 (DHDLKPNATT…PKTHEMYLNV (238 aa)). Positions 415–466 (LEPTKKDSQTSASESLSNSGVSSGDIDSSQIITNPLPPVASPPPASKAKEVS) are disordered. The segment covering 425–437 (SASESLSNSGVSS) has biased composition (low complexity). Over residues 449–459 (PLPPVASPPPA) the composition is skewed to pro residues. One can recognise a PI3K/PI4K catalytic domain in the interval 605-871 (IPETATLFKS…LIDESVHALF (267 aa)). The G-loop stretch occupies residues 611-617 (LFKSALM). Residues 740-748 (GVGDRHLDN) form a catalytic loop region. The interval 759-780 (HIDFGYILGRDPKPLPPPMKLN) is activation loop.

The protein belongs to the PI3/PI4-kinase family. Component of the PI3K (PI3KC3/PI3K-III/class III phosphatidylinositol 3-kinase) complex the core of which is composed of the catalytic subunit PIK3C3, the regulatory subunit PIK3R4 and BECN1 associating with additional regulatory/auxiliary subunits to form alternative complex forms. Alternative complex forms containing a fourth regulatory subunit in a mutually exclusive manner are: the PI3K complex I (PI3KC3-C1) containing ATG14, and the PI3K complex II (PI3KC3-C2) containing UVRAG. PI3KC3-C1 displays a V-shaped architecture with PIK3R4 serving as a bridge between PIK3C3 and the ATG14:BECN1 subcomplex. Both, PI3KC3-C1 and PI3KC3-C2, can associate with further regulatory subunits such as RUBCN, SH3GLB1/Bif-1 and AMBRA1. PI3KC3-C1 probably associates with PIK3CB. Interacts with RAB7A in the presence of PIK3R4. Interacts with AMBRA1. Interacts with BECN1P1/BECN2. Interacts with SLAMF1. May be a component of a complex composed of RAB5A (in GDP-bound form), DYN2 and PIK3C3. Interacts with NCKAP1L. Interacts with ATG14; this interaction is increased in the absence of TMEM39A. Interacts with STEEP1; the interaction is STING1-dependent and required for trafficking of STING1 from the endoplasmic reticulum. Interacts with YWHAG. Interacts with ARMC3. Requires Mn(2+) as cofactor. Ubiquitinated via 'Lys-29'- and 'Lys-48'-linked ubiquitination by UBE3C, promoting its degradation. Deubiquitination by ZRANB1/TRABID promotes its stabilization, leading to autophagosome maturation.

The protein localises to the midbody. Its subcellular location is the late endosome. It localises to the cytoplasmic vesicle. The protein resides in the autophagosome. It carries out the reaction a 1,2-diacyl-sn-glycero-3-phospho-(1D-myo-inositol) + ATP = a 1,2-diacyl-sn-glycero-3-phospho-(1D-myo-inositol-3-phosphate) + ADP + H(+). Functionally, catalytic subunit of the PI3K complex that mediates formation of phosphatidylinositol 3-phosphate; different complex forms are believed to play a role in multiple membrane trafficking pathways: PI3KC3-C1 is involved in initiation of autophagosomes and PI3KC3-C2 in maturation of autophagosomes and endocytosis. As part of PI3KC3-C1, promotes endoplasmic reticulum membrane curvature formation prior to vesicle budding. Involved in regulation of degradative endocytic trafficking and required for the abscission step in cytokinesis, probably in the context of PI3KC3-C2. Involved in the transport of lysosomal enzyme precursors to lysosomes. Required for transport from early to late endosomes. The sequence is that of Phosphatidylinositol 3-kinase catalytic subunit type 3 from Mus musculus (Mouse).